Here is a 131-residue protein sequence, read N- to C-terminus: UPF0102 protein YraN (131 aa).

Over residues Met-1–Thr-19 the composition is skewed to polar residues. A disordered region spans residues Met-1–Gly-20.

It belongs to the UPF0102 family.

The chain is UPF0102 protein YraN from Escherichia fergusonii (strain ATCC 35469 / DSM 13698 / CCUG 18766 / IAM 14443 / JCM 21226 / LMG 7866 / NBRC 102419 / NCTC 12128 / CDC 0568-73).